The following is a 93-amino-acid chain: RNA-binding protein Hfq (93 aa).

In terms of domain architecture, Sm spans Asp-9–Pro-68. A compositionally biased stretch (low complexity) spans Pro-74–Ala-86. The segment at Pro-74 to Gln-93 is disordered.

Belongs to the Hfq family. As to quaternary structure, homohexamer.

Functionally, RNA chaperone that binds small regulatory RNA (sRNAs) and mRNAs to facilitate mRNA translational regulation in response to envelope stress, environmental stress and changes in metabolite concentrations. Also binds with high specificity to tRNAs. In Alcanivorax borkumensis (strain ATCC 700651 / DSM 11573 / NCIMB 13689 / SK2), this protein is RNA-binding protein Hfq.